Here is a 144-residue protein sequence, read N- to C-terminus: Ribosomal RNA large subunit methyltransferase H (144 aa).

Residues leucine 63, glycine 92, and 111–116 (LSPMTF) each bind S-adenosyl-L-methionine.

It belongs to the RNA methyltransferase RlmH family. Homodimer.

It is found in the cytoplasm. It carries out the reaction pseudouridine(1915) in 23S rRNA + S-adenosyl-L-methionine = N(3)-methylpseudouridine(1915) in 23S rRNA + S-adenosyl-L-homocysteine + H(+). In terms of biological role, specifically methylates the pseudouridine at position 1915 (m3Psi1915) in 23S rRNA. The sequence is that of Ribosomal RNA large subunit methyltransferase H from Parasynechococcus marenigrum (strain WH8102).